The sequence spans 384 residues: S-adenosylmethionine synthase (384 aa).

Residue His15 coordinates ATP. Residue Asp17 coordinates Mg(2+). Residue Glu43 participates in K(+) binding. Glu56 and Gln99 together coordinate L-methionine. The interval 99–109 (QSPDINQGVDK) is flexible loop. Residues 164–166 (DAK), 230–231 (RF), Asp239, 245–246 (RK), Ala262, and Lys266 each bind ATP. Asp239 serves as a coordination point for L-methionine. Lys270 lines the L-methionine pocket.

It belongs to the AdoMet synthase family. Homotetramer; dimer of dimers. Requires Mg(2+) as cofactor. K(+) is required as a cofactor.

The protein resides in the cytoplasm. The catalysed reaction is L-methionine + ATP + H2O = S-adenosyl-L-methionine + phosphate + diphosphate. It functions in the pathway amino-acid biosynthesis; S-adenosyl-L-methionine biosynthesis; S-adenosyl-L-methionine from L-methionine: step 1/1. Its function is as follows. Catalyzes the formation of S-adenosylmethionine (AdoMet) from methionine and ATP. The overall synthetic reaction is composed of two sequential steps, AdoMet formation and the subsequent tripolyphosphate hydrolysis which occurs prior to release of AdoMet from the enzyme. This is S-adenosylmethionine synthase from Aliivibrio salmonicida (strain LFI1238) (Vibrio salmonicida (strain LFI1238)).